A 172-amino-acid polypeptide reads, in one-letter code: Adenine phosphoribosyltransferase (172 aa).

Belongs to the purine/pyrimidine phosphoribosyltransferase family. As to quaternary structure, homodimer.

It localises to the cytoplasm. It carries out the reaction AMP + diphosphate = 5-phospho-alpha-D-ribose 1-diphosphate + adenine. It functions in the pathway purine metabolism; AMP biosynthesis via salvage pathway; AMP from adenine: step 1/1. In terms of biological role, catalyzes a salvage reaction resulting in the formation of AMP, that is energically less costly than de novo synthesis. This chain is Adenine phosphoribosyltransferase, found in Staphylococcus haemolyticus (strain JCSC1435).